The primary structure comprises 608 residues: Auxin response factor 3 (608 aa).

Residues 1–40 (MGGLIDLNVMETEEDETQTQTPSSASGSVSPTSSSSASVS) form a disordered region. A compositionally biased stretch (low complexity) spans 18 to 40 (QTQTPSSASGSVSPTSSSSASVS). Residues 159-261 (FCKTLTASDT…KLRLGVRRAS (103 aa)) constitute a DNA-binding region (TF-B3).

The protein belongs to the ARF family. Homo and heterodimers. As to expression, expressed in the whole plant.

The protein localises to the nucleus. Auxin response factors (ARFs) are transcriptional factors that bind specifically to the DNA sequence 5'-TGTCTC-3' found in the auxin-responsive promoter elements (AuxREs). Could act as transcriptional activator or repressor. Formation of heterodimers with Aux/IAA proteins may alter their ability to modulate early auxin response genes expression. Involved in the establishment or elaboration of tissue patterning during gynoecial development. The chain is Auxin response factor 3 (ARF3) from Arabidopsis thaliana (Mouse-ear cress).